Consider the following 371-residue polypeptide: MRPDCTDFNTLFLDDVPMMDMRAPIEFTKGAFPGVVNLPLMNDQERQKVGTCFKQQGQSAAIALGHQLVNGALKQQRLEAWAAFAQAHPDGYLYCFRGGLRSQIVQGWLKEAGIQYPKVVGGYKAMRTFLLDTTQQAVEQCDFVLLGGLTGTGKTDVLQQLDNVLDLEGHANHRGSSFGKRATAQPAQIDFENGLAIDMLKKRARGIGQFVLEDEGRIVGSCTVPLGLYQGMQRYPLVWLEDAFDNRVERILRDYVTNLCAEFVAVHGEEDGRRLFAERMRQSMANIYKRLGGERFQRLSELLGQALDEQLRSGDVSLHRGWIEGLLKEYYDPMYAYQREAKAGRIEFAGDGVEVREYLKARARRQHRVDL.

In terms of domain architecture, Rhodanese spans 12-135 (FLDDVPMMDM…MRTFLLDTTQ (124 aa)). Cysteine 95 functions as the S-selanylcysteine intermediate in the catalytic mechanism.

Belongs to the SelU family. Monomer.

The enzyme catalyses 5-methylaminomethyl-2-thiouridine(34) in tRNA + selenophosphate + (2E)-geranyl diphosphate + H2O + H(+) = 5-methylaminomethyl-2-selenouridine(34) in tRNA + (2E)-thiogeraniol + phosphate + diphosphate. It carries out the reaction 5-methylaminomethyl-2-thiouridine(34) in tRNA + (2E)-geranyl diphosphate = 5-methylaminomethyl-S-(2E)-geranyl-thiouridine(34) in tRNA + diphosphate. The catalysed reaction is 5-methylaminomethyl-S-(2E)-geranyl-thiouridine(34) in tRNA + selenophosphate + H(+) = 5-methylaminomethyl-2-(Se-phospho)selenouridine(34) in tRNA + (2E)-thiogeraniol. It catalyses the reaction 5-methylaminomethyl-2-(Se-phospho)selenouridine(34) in tRNA + H2O = 5-methylaminomethyl-2-selenouridine(34) in tRNA + phosphate. Functionally, involved in the post-transcriptional modification of the uridine at the wobble position (U34) of tRNA(Lys), tRNA(Glu) and tRNA(Gln). Catalyzes the conversion of 2-thiouridine (S2U-RNA) to 2-selenouridine (Se2U-RNA). Acts in a two-step process involving geranylation of 2-thiouridine (S2U) to S-geranyl-2-thiouridine (geS2U) and subsequent selenation of the latter derivative to 2-selenouridine (Se2U) in the tRNA chain. The chain is tRNA 2-selenouridine synthase from Pseudomonas entomophila (strain L48).